Here is a 270-residue protein sequence, read N- to C-terminus: Formamidopyrimidine-DNA glycosylase (270 aa).

Pro-2 (schiff-base intermediate with DNA) is an active-site residue. Residue Glu-3 is the Proton donor of the active site. Lys-59 (proton donor; for beta-elimination activity) is an active-site residue. 3 residues coordinate DNA: His-91, Arg-110, and Lys-151. The segment at 236–270 (RVYGRDKEPCVTCGQQVKSKVLGGRNTFWCSRCQK) adopts an FPG-type zinc-finger fold. The active-site Proton donor; for delta-elimination activity is Arg-260.

This sequence belongs to the FPG family. As to quaternary structure, monomer. It depends on Zn(2+) as a cofactor.

It carries out the reaction Hydrolysis of DNA containing ring-opened 7-methylguanine residues, releasing 2,6-diamino-4-hydroxy-5-(N-methyl)formamidopyrimidine.. The enzyme catalyses 2'-deoxyribonucleotide-(2'-deoxyribose 5'-phosphate)-2'-deoxyribonucleotide-DNA = a 3'-end 2'-deoxyribonucleotide-(2,3-dehydro-2,3-deoxyribose 5'-phosphate)-DNA + a 5'-end 5'-phospho-2'-deoxyribonucleoside-DNA + H(+). Involved in base excision repair of DNA damaged by oxidation or by mutagenic agents. Acts as a DNA glycosylase that recognizes and removes damaged bases. Has a preference for oxidized purines, such as 7,8-dihydro-8-oxoguanine (8-oxoG). Has AP (apurinic/apyrimidinic) lyase activity and introduces nicks in the DNA strand. Cleaves the DNA backbone by beta-delta elimination to generate a single-strand break at the site of the removed base with both 3'- and 5'-phosphates. This Bdellovibrio bacteriovorus (strain ATCC 15356 / DSM 50701 / NCIMB 9529 / HD100) protein is Formamidopyrimidine-DNA glycosylase.